We begin with the raw amino-acid sequence, 241 residues long: Endodeoxyribonuclease NucC (241 aa).

Residues Asp73, Glu104, and Lys106 contribute to the active site. Asp73 and Glu104 together coordinate Mg(2+).

Belongs to the NucC endonuclease family. As to quaternary structure, self-oligomerizes. Forms homotrimers; in the presence of cAAA the trimers associate face-to-face to form homohexamers. The 2 cAAA-binding sites are on the exterior of the hexamer at the three-way junction, there are maximally 2 cyclic nucleotides per hexamer. It depends on Mg(2+) as a cofactor.

Activated by cAAA and to a lesser extent cAA; both cyclic nucleotides are products of its cognate CD-NTase. Cyclic nucleotide binding causes hexamerization. Its function is as follows. Effector DNase of a CBASS antivirus system. CBASS (cyclic oligonucleotide-based antiphage signaling system) provides immunity against bacteriophage. The CD-NTase protein synthesizes cyclic nucleotides in response to infection; these serve as specific second messenger signals. The signals activate a diverse range of effectors, leading to bacterial cell death and thus abortive phage infection. A type III-C(AAA) CBASS system. Functionally, a cyclic nucleotide-activated dsDNase. In the presence of 3',3',3'-cyclic AMP-AMP-AMP (cAAA) and to a lesser extent cyclic-di-AMP (c-di-AMP), endonucleolytically degrades dsDNA. Binds one cAAA in a pocket on one surface of the trimer; cAAA binding promotes hexamerization which is probably necessary for nuclease activation. The nuclease digests dsDNA to about 50 bp lengths. DNA has been modeled to contact a pair of juxtaposed active sites (one from each layer of the hexamer), accounting for cleavage on both strands. The polypeptide is Endodeoxyribonuclease NucC (Pseudomonas aeruginosa).